Consider the following 652-residue polypeptide: DNA mismatch repair protein MutL (652 aa).

Belongs to the DNA mismatch repair MutL/HexB family.

This protein is involved in the repair of mismatches in DNA. It is required for dam-dependent methyl-directed DNA mismatch repair. May act as a 'molecular matchmaker', a protein that promotes the formation of a stable complex between two or more DNA-binding proteins in an ATP-dependent manner without itself being part of a final effector complex. The polypeptide is DNA mismatch repair protein MutL (Aliivibrio salmonicida (strain LFI1238) (Vibrio salmonicida (strain LFI1238))).